The primary structure comprises 314 residues: Putative S-adenosyl-L-methionine-dependent methyltransferase MAV_4441 (314 aa).

Residues D138 and 167–168 (DL) each bind S-adenosyl-L-methionine.

Belongs to the UPF0677 family.

Functionally, exhibits S-adenosyl-L-methionine-dependent methyltransferase activity. This is Putative S-adenosyl-L-methionine-dependent methyltransferase MAV_4441 from Mycobacterium avium (strain 104).